Reading from the N-terminus, the 30-residue chain is Photosystem I reaction center subunit XII (30 aa).

A helical membrane pass occupies residues 7-27 (VFIGLVIALVPAILAFKLGLS).

This sequence belongs to the PsaM family.

It localises to the plastid. Its subcellular location is the chloroplast thylakoid membrane. This chain is Photosystem I reaction center subunit XII, found in Cyanidium caldarium (Red alga).